The sequence spans 245 residues: 3-deoxy-manno-octulosonate cytidylyltransferase (245 aa).

It belongs to the KdsB family.

The protein localises to the cytoplasm. The enzyme catalyses 3-deoxy-alpha-D-manno-oct-2-ulosonate + CTP = CMP-3-deoxy-beta-D-manno-octulosonate + diphosphate. Its pathway is nucleotide-sugar biosynthesis; CMP-3-deoxy-D-manno-octulosonate biosynthesis; CMP-3-deoxy-D-manno-octulosonate from 3-deoxy-D-manno-octulosonate and CTP: step 1/1. The protein operates within bacterial outer membrane biogenesis; lipopolysaccharide biosynthesis. Activates KDO (a required 8-carbon sugar) for incorporation into bacterial lipopolysaccharide in Gram-negative bacteria. The sequence is that of 3-deoxy-manno-octulosonate cytidylyltransferase from Rhodopseudomonas palustris (strain HaA2).